Here is a 105-residue protein sequence, read N- to C-terminus: Cuticle protein AMP1B (105 aa).

The segment at 1-21 (DRDAQTLTDERSDQGDGNFRY) is disordered. Residues 16–81 (DGNFRYEFET…PSSDLLPVPP (66 aa)) form the Chitin-binding type R&amp;R domain.

Arthrodial membrane.

The polypeptide is Cuticle protein AMP1B (Homarus americanus (American lobster)).